The sequence spans 84 residues: U-scoloptoxin(10)-Er1a (84 aa).

The signal sequence occupies residues 1–24 (MSRFCLLFVAFGFVLYFLHMEVTG).

Belongs to the scoloptoxin-10 family. Contains 3 disulfide bonds. Expressed by the venom gland.

Its subcellular location is the secreted. The chain is U-scoloptoxin(10)-Er1a from Ethmostigmus rubripes (Giant centipede).